We begin with the raw amino-acid sequence, 224 residues long: Imidazole glycerol phosphate synthase subunit HisH (224 aa).

Residues 5–214 (DTIIIDTGCA…MKMNAGSFAG (210 aa)) form the Glutamine amidotransferase type-1 domain. Cys80 serves as the catalytic Nucleophile. Catalysis depends on residues His189 and Glu191.

Heterodimer of HisH and HisF.

It localises to the cytoplasm. The enzyme catalyses 5-[(5-phospho-1-deoxy-D-ribulos-1-ylimino)methylamino]-1-(5-phospho-beta-D-ribosyl)imidazole-4-carboxamide + L-glutamine = D-erythro-1-(imidazol-4-yl)glycerol 3-phosphate + 5-amino-1-(5-phospho-beta-D-ribosyl)imidazole-4-carboxamide + L-glutamate + H(+). It carries out the reaction L-glutamine + H2O = L-glutamate + NH4(+). Its pathway is amino-acid biosynthesis; L-histidine biosynthesis; L-histidine from 5-phospho-alpha-D-ribose 1-diphosphate: step 5/9. In terms of biological role, IGPS catalyzes the conversion of PRFAR and glutamine to IGP, AICAR and glutamate. The HisH subunit catalyzes the hydrolysis of glutamine to glutamate and ammonia as part of the synthesis of IGP and AICAR. The resulting ammonia molecule is channeled to the active site of HisF. The chain is Imidazole glycerol phosphate synthase subunit HisH from Shewanella loihica (strain ATCC BAA-1088 / PV-4).